The sequence spans 37 residues: Large ribosomal subunit protein bL36 (37 aa).

The protein belongs to the bacterial ribosomal protein bL36 family.

The protein is Large ribosomal subunit protein bL36 of Sulfurovum sp. (strain NBC37-1).